We begin with the raw amino-acid sequence, 1165 residues long: Valine--tRNA ligase (1165 aa).

Positions 43 to 53 (PNVTGSLHMGH) match the 'HIGH' region motif. The short motif at 800–804 (KMSKT) is the 'KMSKS' region element. Residue Lys-803 coordinates ATP. Coiled-coil stretches lie at residues 1001–1032 (KNEDEIYEEDKQKVERLKEIISAIRAIRSDLQ) and 1097–1165 (HVDL…VLRS).

This sequence belongs to the class-I aminoacyl-tRNA synthetase family. ValS type 1 subfamily. As to quaternary structure, monomer.

It localises to the cytoplasm. It catalyses the reaction tRNA(Val) + L-valine + ATP = L-valyl-tRNA(Val) + AMP + diphosphate. Functionally, catalyzes the attachment of valine to tRNA(Val). As ValRS can inadvertently accommodate and process structurally similar amino acids such as threonine, to avoid such errors, it has a 'posttransfer' editing activity that hydrolyzes mischarged Thr-tRNA(Val) in a tRNA-dependent manner. The protein is Valine--tRNA ligase of Aquifex aeolicus (strain VF5).